The chain runs to 487 residues: L-tartrate/succinate antiporter (487 aa).

A run of 14 helical transmembrane segments spans residues 10-30, 33-53, 54-74, 93-113, 137-157, 189-209, 236-256, 292-312, 313-333, 340-360, 370-390, 393-413, 418-438, and 465-485; these read YLAP…AGLE, TWLY…EPVP, GAVV…WLLF, WAVS…FMFG, TLFL…VTPS, IGSY…AIFL, FLGM…LAYV, LMVG…AAMV, GYSV…DIVS, VFFW…TGFI, SLSG…FYLL, FFAS…AAAL, IPLP…SILT, and IFGL…MPVV.

Belongs to the SLC13A/DASS transporter (TC 2.A.47) family. DIT1 subfamily.

Its subcellular location is the cell inner membrane. It catalyses the reaction (2R,3R)-tartrate(out) + succinate(in) = (2R,3R)-tartrate(in) + succinate(out). In terms of biological role, catalyzes the uptake of tartrate in exchange for intracellular succinate. Essential for anaerobic L-tartrate fermentation. This chain is L-tartrate/succinate antiporter (ttdT), found in Escherichia coli O157:H7.